Reading from the N-terminus, the 157-residue chain is SsrA-binding protein (157 aa).

The protein belongs to the SmpB family.

The protein localises to the cytoplasm. Its function is as follows. Required for rescue of stalled ribosomes mediated by trans-translation. Binds to transfer-messenger RNA (tmRNA), required for stable association of tmRNA with ribosomes. tmRNA and SmpB together mimic tRNA shape, replacing the anticodon stem-loop with SmpB. tmRNA is encoded by the ssrA gene; the 2 termini fold to resemble tRNA(Ala) and it encodes a 'tag peptide', a short internal open reading frame. During trans-translation Ala-aminoacylated tmRNA acts like a tRNA, entering the A-site of stalled ribosomes, displacing the stalled mRNA. The ribosome then switches to translate the ORF on the tmRNA; the nascent peptide is terminated with the 'tag peptide' encoded by the tmRNA and targeted for degradation. The ribosome is freed to recommence translation, which seems to be the essential function of trans-translation. The sequence is that of SsrA-binding protein from Chromohalobacter salexigens (strain ATCC BAA-138 / DSM 3043 / CIP 106854 / NCIMB 13768 / 1H11).